The chain runs to 282 residues: MITTESISAIRKQVLAWRLKGETVAFVPTMGNLHLGHLTLVREAKSRADHVVASIFVNPMQFGQNEDLDAYPRTLSDDQSALVEAGAELLFTPTPSIIYPKGMEAQTFVEVPLISDQLCGESRPGHFRGVATIVCKLFNIVQPDIAVFGQKDFQQLLVIKTMVEDLSMPIEIIGVETIREDSGLAMSSRNGYLTAAQKQQAAVLKQTLDKMAIELRAGKQTDEVISTAKQAISAAGFDNDYLDIRNAKTFNKADSSDAEQVILVAAYMGATRLIDNLIVKLK.

30–37 (MGNLHLGH) contacts ATP. His37 functions as the Proton donor in the catalytic mechanism. Position 61 (Gln61) interacts with (R)-pantoate. A beta-alanine-binding site is contributed by Gln61. 149 to 152 (GQKD) serves as a coordination point for ATP. (R)-pantoate is bound at residue Gln155. Residues Ile178 and 186–189 (MSSR) contribute to the ATP site.

Belongs to the pantothenate synthetase family. In terms of assembly, homodimer.

It is found in the cytoplasm. The catalysed reaction is (R)-pantoate + beta-alanine + ATP = (R)-pantothenate + AMP + diphosphate + H(+). It functions in the pathway cofactor biosynthesis; (R)-pantothenate biosynthesis; (R)-pantothenate from (R)-pantoate and beta-alanine: step 1/1. In terms of biological role, catalyzes the condensation of pantoate with beta-alanine in an ATP-dependent reaction via a pantoyl-adenylate intermediate. This Shewanella piezotolerans (strain WP3 / JCM 13877) protein is Pantothenate synthetase.